A 1583-amino-acid polypeptide reads, in one-letter code: Methyl-CpG-binding domain protein 5/6 homolog sba (1583 aa).

The interval 81 to 115 (AVHQQQQQHHHQQQQQQQHQQQQQILPAGLVNGNG) is disordered. The segment covering 83–104 (HQQQQQHHHQQQQQQQHQQQQQ) has biased composition (low complexity). Residues 238 to 308 (RKTATSYNGN…YLFDFNAQVP (71 aa)) enclose the MBD domain. 7 disordered regions span residues 427–457 (NKLP…PTSQ), 556–579 (EPIV…QQQL), 630–694 (VTLV…QTQV), 839–862 (AELH…AASS), 940–980 (PPAQ…ISPQ), 1179–1247 (VMSR…RSIC), and 1287–1339 (QESP…SFPL). Low complexity predominate over residues 430-439 (PATNRTATTP). A compositionally biased stretch (pro residues) spans 440–449 (TPAPTPPPQH). Over residues 563-579 (QQQQQQQQQQLQQQQQL) the composition is skewed to low complexity. A compositionally biased stretch (polar residues) spans 658–677 (AISTSHESPRQSLSSPTDSV). Low complexity-rich tracts occupy residues 679–693 (SAKS…PQTQ) and 851–862 (VSQPSPVAAASS). Polar residues-rich tracts occupy residues 1179 to 1195 (VMSR…TTTC), 1216 to 1240 (CVSS…PSST), and 1287 to 1313 (QESP…TVRT). Positions 1323–1333 (RGAARAAPSAS) are enriched in low complexity. One can recognise a PWWP domain in the interval 1346–1408 (IGELIWGPAR…VNSLQSLSEG (63 aa)). Residues 1415-1446 (AQKDTRKSRKLNSQLERAIQEAMTELDNISAS) are a coiled coil. The tract at residues 1471-1497 (IGGQQQYQQQQQQQQQQQSPSSTNNKI) is disordered. A compositionally biased stretch (low complexity) spans 1474–1488 (QQQYQQQQQQQQQQQ).

As to quaternary structure, component of the polycomb repressive deubiquitinase (PR-DUB) complex, at least composed of caly/calypso, Asx and sba (MDB5/6 homolog). Interacts (via MBD domain) with Asx (via PHD domain); the interaction is important for the stability of the PR-DUB complex.

Functionally, non-catalytic component of the polycomb repressive deubiquitinase (PR-DUB) complex, a complex that specifically mediates deubiquitination of histone H2A monoubiquitinated at 'Lys-119' (H2AK118ub1). Important for maintaining stability of the PR-DUB complex. Probable epigenetic regulator involved in developmental pattern formation and eye development. The protein is Methyl-CpG-binding domain protein 5/6 homolog sba of Drosophila melanogaster (Fruit fly).